We begin with the raw amino-acid sequence, 707 residues long: Protein MICRORCHIDIA 7 (707 aa).

Basic and acidic residues-rich tracts occupy residues 1–11 and 575–587; these read MDNSIHVKREI and DNRD…DREG. 2 disordered regions span residues 1–22 and 568–619; these read MDNS…AGFP and EKSA…SGKD. Residues 590 to 613 are compositionally biased toward polar residues; it reads SIKTPTPASDKFYSSSYPNHNGDN. Residues 620-701 adopt a coiled-coil conformation; the sequence is GARLQEELRR…NKIKKMEGSK (82 aa). The Nuclear localization signal motif lies at 633 to 640; sequence RRKALEVE.

The protein belongs to the MORC ATPase protein family. In terms of assembly, homodimer and heterodimer. Component of an RNA-directed DNA methylation (RdDM) complex. Forms homomeric complexes. Mg(2+) is required as a cofactor. It depends on Mn(2+) as a cofactor.

The protein resides in the nucleus. Functionally, exhibits ATPase activity. Binds DNA/RNA in a non-specific manner and exhibits endonuclease activity. Probably involved in DNA repair. Involved in RNA-directed DNA methylation (RdDM) as a component of the RdDM machinery and required for gene silencing. May also be involved in the regulation of chromatin architecture to maintain gene silencing. Together with MORC4, acts to suppress a wide set of non-methylated protein-coding genes, especially involved in pathogen response. Positive regulators of defense against the oomycete Hyaloperonospora arabidopsidis (Hpa). The polypeptide is Protein MICRORCHIDIA 7 (Arabidopsis thaliana (Mouse-ear cress)).